The chain runs to 874 residues: MSTFFQKQQQVAALDPRLGGLMASAGLYNLKALIKAIRSCKTLADERSLIQKESASIRTAFKDEDPFARHNNIAKLLYIHMLGYPAHFGQIECLKLVATPRFTDKRLGYLGIMLLLDENTEVLTLVTNGLKNDMEHSNMYVCGLALCTFANIASEEMSRDLCNEIEKLMGSSNTYIRRKAAICAMRIVRKVPDLIDHFVDRTQQLLSDKNHGVLLCAVTLAIEICRQDDEALTVYRRAVPLLVQHLKSLVTTGYSPEHDVSGITDPFLQVKILRLLRILGKENAQASETMNDILAQVATNTEASKNVGNSILYETVLTILEIDADNGLRVMAINILGKFLSNRDNNIRYVALNTLSKVVSMDTNAVQRHRNIILDCLRDGDISIRRRALELSYALINESNVRVLTRELLSFLEVADNEFKLGMTTQICLAAEKFAPNKRWHIDTVLRVLKLAGNYVREEILSAFIRLVCHTPELQAYTVQKLFSGLHQDFSQESLTLAAVWVIGEFGDVLIQGGNFEDEELVREVQPKDVVDLLSSVLDSPYVNGLIRQFVLTSLAKLHTRLSDASQQSRIEQIIASFETSVEVEIQQRSVEFATLLKRSDIRQGVLESMPPPEIKQTVLGTVSEAKPVGSTRSDKDALLDLMGDEMPVTSGGGTGADNAPSGATQQSTHDLLADIFGGGDMGGMPSAAPAASASAAQKPKSSVNDILGLFGDGASAPAAAAQQAPTPAPAATSSYGGLDLLGGLGASSSASTPAATPASTVAKSHTVYTKHGLTITLTPTTNPARPEIVHITARFTSATSAISNINFQAAVPKTHKLQMQAISNSTVHPDSTETQPLRVMVPPGAAVRLRLRIAFQVDGHSVQDQTDWAQPSA.

Residues 761–873 (TVAKSHTVYT…QDQTDWAQPS (113 aa)) enclose the GAE domain.

It belongs to the adaptor complexes large subunit family. In terms of assembly, adaptor protein complex 1 (AP-1) is a heterotetramer composed of two large adaptins (gamma-type subunit APL4 and beta-type subunit APL2), a medium adaptin (mu-type subunit APM1) and a small adaptin (sigma-type subunit APS1). AP-1 interacts with clathrin.

The protein resides in the cytoplasmic vesicle. It is found in the clathrin-coated vesicle membrane. It localises to the golgi apparatus. Functionally, adaptins are components of the adaptor complexes which link clathrin to receptors in coated vesicles. Clathrin-associated protein complexes are believed to interact with the cytoplasmic tails of membrane proteins, leading to their selection and concentration. The AP-1 complex interacts directly with clathrin. Required for apical growth extension. This is AP-1 complex subunit gamma-1 (APL4) from Mycosarcoma maydis (Corn smut fungus).